The chain runs to 239 residues: tRNA (guanine-N(7)-)-methyltransferase (239 aa).

Residues E69, E94, D121, and D144 each contribute to the S-adenosyl-L-methionine site. D144 is a catalytic residue. Residue K148 coordinates substrate. The tract at residues 150–155 (RHNKRR) is interaction with RNA. Residues D180 and 217–220 (TKFE) contribute to the substrate site.

This sequence belongs to the class I-like SAM-binding methyltransferase superfamily. TrmB family. As to quaternary structure, monomer.

The catalysed reaction is guanosine(46) in tRNA + S-adenosyl-L-methionine = N(7)-methylguanosine(46) in tRNA + S-adenosyl-L-homocysteine. It functions in the pathway tRNA modification; N(7)-methylguanine-tRNA biosynthesis. Functionally, catalyzes the formation of N(7)-methylguanine at position 46 (m7G46) in tRNA. In Cronobacter sakazakii (strain ATCC BAA-894) (Enterobacter sakazakii), this protein is tRNA (guanine-N(7)-)-methyltransferase.